The sequence spans 270 residues: Myelin protein zero-like protein 1 (270 aa).

Positions 1-35 are cleaved as a signal peptide; that stretch reads MAEAVGAVTLIAAPARRRWLWSALAAMLGLLTARI. In terms of domain architecture, Ig-like V-type spans 36–151; it reads SALEVHTPKE…DIVVRPGQIR (116 aa). Topologically, residues 36-162 are extracellular; it reads SALEVHTPKE…HVVEIDNLLV (127 aa). Residues asparagine 50 and asparagine 130 are each glycosylated (N-linked (GlcNAc...) asparagine). A disulfide bond links cysteine 58 and cysteine 135. A helical membrane pass occupies residues 163-183; the sequence is FLVWVVVGTVTAVVLGLTLLI. Over 184 to 270 the chain is Cytoplasmic; it reads SLVLVVLYRR…SVVYADIRKD (87 aa). The tract at residues 201–257 is disordered; it reads TGCSTSERLSPVKQAPRKCPSDTEGLVKSPPSAGSHQGPVIYAQLDHSGGHHSGKIN. Phosphoserine is present on residues serine 204, serine 206, serine 210, and serine 221. The short motif at 240 to 245 is the ITIM motif 1 element; that stretch reads VIYAQL. Phosphotyrosine is present on tyrosine 242. Serine 261 is subject to Phosphoserine. Positions 262–267 match the ITIM motif 2 motif; that stretch reads VVYADI. Position 264 is a phosphotyrosine (tyrosine 264).

This sequence belongs to the myelin P0 protein family. In terms of assembly, interacts with phosphorylated PTPN11/SHP-2. Post-translationally, phosphorylated on tyrosine residues upon stimulation with pervanadate and concanavalin-A (ConA). Phosphorylation at Tyr-242 and Tyr-264 is required for interaction with PTPN11/SHP-2. Dephosphorylated by PTPN11/SHP-2 (in vitro). N-glycosylated.

It is found in the membrane. Functionally, cell surface receptor, which is involved in signal transduction processes. Recruits PTPN11/SHP-2 to the cell membrane and is a putative substrate of PTPN11/SHP-2. Is a major receptor for concanavalin-A (ConA) and is involved in cellular signaling induced by ConA, which probably includes Src family tyrosine-protein kinases. May be involved in regulation of integrin-mediated cell motility. The protein is Myelin protein zero-like protein 1 (Mpzl1) of Rattus norvegicus (Rat).